The primary structure comprises 417 residues: Riboflavin biosynthesis protein RibBA (417 aa).

A DHBP synthase region spans residues 1 to 204 (MTRFDSIERA…IADLIAWRRK (204 aa)). D-ribulose 5-phosphate is bound by residues 28–29 (RE), Asp33, 141–145 (RPGHT), and Glu165. Residue Glu29 participates in Mg(2+) binding. His144 is a Mg(2+) binding site. Positions 205–417 (HEKHVERVAS…LDDFEAGEML (213 aa)) are GTP cyclohydrolase II. GTP is bound at residue 259-263 (RVHSE). Cys264, Cys275, and Cys277 together coordinate Zn(2+). GTP-binding positions include Gln280, 303-305 (EGR), and Thr325. Asp337 (proton acceptor; for GTP cyclohydrolase activity) is an active-site residue. Arg339 acts as the Nucleophile; for GTP cyclohydrolase activity in catalysis. 2 residues coordinate GTP: Thr360 and Lys365.

This sequence in the N-terminal section; belongs to the DHBP synthase family. The protein in the C-terminal section; belongs to the GTP cyclohydrolase II family. Requires Mg(2+) as cofactor. Mn(2+) is required as a cofactor. It depends on Zn(2+) as a cofactor.

It catalyses the reaction D-ribulose 5-phosphate = (2S)-2-hydroxy-3-oxobutyl phosphate + formate + H(+). The enzyme catalyses GTP + 4 H2O = 2,5-diamino-6-hydroxy-4-(5-phosphoribosylamino)-pyrimidine + formate + 2 phosphate + 3 H(+). It functions in the pathway cofactor biosynthesis; riboflavin biosynthesis; 2-hydroxy-3-oxobutyl phosphate from D-ribulose 5-phosphate: step 1/1. The protein operates within cofactor biosynthesis; riboflavin biosynthesis; 5-amino-6-(D-ribitylamino)uracil from GTP: step 1/4. Its function is as follows. Catalyzes the conversion of D-ribulose 5-phosphate to formate and 3,4-dihydroxy-2-butanone 4-phosphate. Catalyzes the conversion of GTP to 2,5-diamino-6-ribosylamino-4(3H)-pyrimidinone 5'-phosphate (DARP), formate and pyrophosphate. This is Riboflavin biosynthesis protein RibBA from Rhodococcus jostii (strain RHA1).